Here is a 395-residue protein sequence, read N- to C-terminus: MIAVRHLTILGSTGSIGVSTLDVVARHPDRFRVVALTANKSVQKILEQCRRFEPRYAVLLDEASAELLQVEIRRAGLATEVLWGVDSLEKVASLPDVDTVMAAIVGAAGIRPTFAAAATGKRVLLANKETMVMAGRIFTDVVKENHATLLPIDSEHNAIFQSLPQHFSGDLRAVGVRRILLTASGGPFRQMPLAALENVTPGQACAHPNWVMGQKISVDSATMMNKGLEVIEAHWLFEASPEQIEVVVHPQSIIHSMVEYVDGSVLAQLGNPDMRTPIAHALGFPERIETGVNPLDMFKVARLDFEAPDFERFPCLRLAYQALASGGSAPAVLNAANEVAVDSFLKCLMPFTSIPAMIEDVMQTIGRRDIATLDDVLAADGMAREAAQEWLTCLA.

Thr13, Gly14, Ser15, Ile16, Lys40, and Asn127 together coordinate NADPH. Lys128 lines the 1-deoxy-D-xylulose 5-phosphate pocket. Glu129 contributes to the NADPH binding site. Asp153 is a Mn(2+) binding site. The 1-deoxy-D-xylulose 5-phosphate site is built by Ser154, Glu155, Ser184, and His207. Glu155 lines the Mn(2+) pocket. Gly213 serves as a coordination point for NADPH. Residues Ser220, Asn225, Lys226, and Glu229 each contribute to the 1-deoxy-D-xylulose 5-phosphate site. Glu229 contributes to the Mn(2+) binding site.

It belongs to the DXR family. The cofactor is Mg(2+). Requires Mn(2+) as cofactor.

It catalyses the reaction 2-C-methyl-D-erythritol 4-phosphate + NADP(+) = 1-deoxy-D-xylulose 5-phosphate + NADPH + H(+). It functions in the pathway isoprenoid biosynthesis; isopentenyl diphosphate biosynthesis via DXP pathway; isopentenyl diphosphate from 1-deoxy-D-xylulose 5-phosphate: step 1/6. Catalyzes the NADPH-dependent rearrangement and reduction of 1-deoxy-D-xylulose-5-phosphate (DXP) to 2-C-methyl-D-erythritol 4-phosphate (MEP). The chain is 1-deoxy-D-xylulose 5-phosphate reductoisomerase from Nitrosospira multiformis (strain ATCC 25196 / NCIMB 11849 / C 71).